The primary structure comprises 609 residues: Chloride channel CLIC-like protein 1 (609 aa).

An N-terminal signal peptide occupies residues 1–25 (MKLSSSSSFGLCILVVFFCFVVIES). The next 3 membrane-spanning stretches (helical) occupy residues 212-235 (VSLI…SWFV), 241-260 (FAVS…YMLA), and 358-380 (VTLQ…YGSA). The interval 398–553 (EQPPPAVGQR…PSSIDVKTVG (156 aa)) is disordered. 2 stretches are compositionally biased toward basic and acidic residues: residues 454–474 (ENRE…KRTP) and 507–537 (EEVK…DRSE). A compositionally biased stretch (low complexity) spans 538–547 (PITSEPPSSI).

It belongs to the chloride channel MCLC family. Expressed in the hindbrain, swim bladder and the eye at 1 day post fertilization (dpf) with increased expression at 3 dpf. At 3 dpf, most prominent expression in the retina, with strong expression in the ganglion cell layer, outer nuclear layer and the retinal pigmented epithelium.

It is found in the endoplasmic reticulum membrane. The protein localises to the golgi apparatus membrane. Its subcellular location is the nucleus membrane. Functionally, seems to act as a chloride ion channel. Plays a role in retina development. The polypeptide is Chloride channel CLIC-like protein 1 (Danio rerio (Zebrafish)).